Reading from the N-terminus, the 675-residue chain is Potassium-transporting ATPase ATP-binding subunit 2 (675 aa).

The next 4 membrane-spanning stretches (helical) occupy residues 34 to 54, 65 to 85, 216 to 236, and 245 to 265; these read IMFV…FPDI, LITI…SEAF, IALF…IVTL, and LILP…TTIG. D304 serves as the catalytic 4-aspartylphosphate intermediate. Residues D341, E345, 372 to 379, and K390 each bind ATP; that span reads FTAETRMS. The Mg(2+) site is built by D513 and D517. Transmembrane regions (helical) follow at residues 569–591, 611–631, and 644–664; these read ALTT…ALMM, AIIS…PIAM, and IFIN…FLGI.

Belongs to the cation transport ATPase (P-type) (TC 3.A.3) family. Type IA subfamily. In terms of assembly, the system is composed of three essential subunits: KdpA, KdpB and KdpC.

The protein resides in the cell membrane. The enzyme catalyses K(+)(out) + ATP + H2O = K(+)(in) + ADP + phosphate + H(+). Its function is as follows. Part of the high-affinity ATP-driven potassium transport (or Kdp) system, which catalyzes the hydrolysis of ATP coupled with the electrogenic transport of potassium into the cytoplasm. This subunit is responsible for energy coupling to the transport system and for the release of the potassium ions to the cytoplasm. This Staphylococcus aureus (strain MRSA252) protein is Potassium-transporting ATPase ATP-binding subunit 2.